A 197-amino-acid chain; its full sequence is Probable molybdenum cofactor guanylyltransferase (197 aa).

Residues 12–14 (LAG), lysine 24, aspartate 71, and aspartate 103 contribute to the GTP site. Aspartate 103 provides a ligand contact to Mg(2+).

Belongs to the MobA family. Mg(2+) is required as a cofactor.

Its subcellular location is the cytoplasm. It carries out the reaction Mo-molybdopterin + GTP + H(+) = Mo-molybdopterin guanine dinucleotide + diphosphate. Its function is as follows. Transfers a GMP moiety from GTP to Mo-molybdopterin (Mo-MPT) cofactor (Moco or molybdenum cofactor) to form Mo-molybdopterin guanine dinucleotide (Mo-MGD) cofactor. This Mycolicibacterium paratuberculosis (strain ATCC BAA-968 / K-10) (Mycobacterium paratuberculosis) protein is Probable molybdenum cofactor guanylyltransferase.